The sequence spans 424 residues: Endo-beta-1,4-galactanase (424 aa).

The signal sequence occupies residues 1-26; sequence MKNVLAVFVVLIFVLGAFGTSGPAEA. 142–145 contacts substrate; that stretch reads DPAK. Residue Glu190 is the Proton donor of the active site. Substrate contacts are provided by residues 229-230 and His263; that span reads TN. Glu288 acts as the Nucleophile in catalysis. Thr292 lines the substrate pocket. Ca(2+) contacts are provided by Asp297, Asp299, His301, and Asn303. Residues Lys307 and Asp384 each coordinate substrate. Ca(2+) is bound by residues Ser392 and Asp395.

The protein belongs to the glycosyl hydrolase 53 family. It depends on Ca(2+) as a cofactor.

It catalyses the reaction The enzyme specifically hydrolyzes (1-&gt;4)-beta-D-galactosidic linkages in type I arabinogalactans.. In terms of biological role, involved in galactan degradation. Degrades arabinose-free galactan to galactooligosaccharides, producing galactotetraose as the main product along with galactotriose, galactobiose, and galactose. May hydrolyze the beta-1,4-galactan linkages of the galactan portion of arabinogalactan type I, a pectic plant polysaccharide from which most of the arabinose has been removed. The polypeptide is Endo-beta-1,4-galactanase (ganB) (Bacillus licheniformis (strain ATCC 14580 / DSM 13 / JCM 2505 / CCUG 7422 / NBRC 12200 / NCIMB 9375 / NCTC 10341 / NRRL NRS-1264 / Gibson 46)).